The sequence spans 130 residues: Fluoride-specific ion channel FluC (130 aa).

The next 4 membrane-spanning stretches (helical) occupy residues 3–23 (FVFL…YFVG), 39–59 (GTFS…HLAV), 67–87 (FGIF…SYGL), and 102–122 (VSYA…GWFL). Na(+)-binding residues include glycine 77 and threonine 80.

This sequence belongs to the fluoride channel Fluc/FEX (TC 1.A.43) family.

It is found in the cell inner membrane. The enzyme catalyses fluoride(in) = fluoride(out). With respect to regulation, na(+) is not transported, but it plays an essential structural role and its presence is essential for fluoride channel function. Fluoride-specific ion channel. Important for reducing fluoride concentration in the cell, thus reducing its toxicity. This chain is Fluoride-specific ion channel FluC, found in Helicobacter pylori (strain ATCC 700392 / 26695) (Campylobacter pylori).